The following is a 1416-amino-acid chain: Phospholipid-transporting ATPase VD (1416 aa).

Topologically, residues 1–97 (MTELLQWARH…PRNLFEQFHR (97 aa)) are cytoplasmic. A helical transmembrane segment spans residues 98 to 118 (AANLYFLFLVVLNWVPLVEAF). The Exoplasmic loop segment spans residues 119 to 120 (QK). A helical transmembrane segment spans residues 121 to 141 (EITMLPLVVVLTIIAIKDGLE). The Cytoplasmic segment spans residues 142-321 (DYRKYKIDKQ…SKLERRANTD (180 aa)). A helical membrane pass occupies residues 322 to 342 (VLWCVLLLIVMCLTGALGHGI). Topologically, residues 343 to 365 (WLSRYENMLFFNIPEPDGRVISP) are exoplasmic loop. Residues 366–386 (VLTGFYVFWTMIILLQVLIPI) form a helical membrane-spanning segment. Residues 387 to 1110 (SLYVSIEIVK…HWCYTRLSNM (724 aa)) are Cytoplasmic-facing. Residue Asp-438 is the 4-aspartylphosphate intermediate of the active site. 3 residues coordinate ATP: Asp-438, Lys-439, and Thr-440. Mg(2+) is bound at residue Asp-438. Thr-440 serves as a coordination point for Mg(2+). Residues 498–544 (AQGCRTVPSGPLGKPSAQLSGSTSAVGNGEGSGEVPHSRQAAFSSPM) form a disordered region. Polar residues predominate over residues 514 to 523 (AQLSGSTSAV). ATP-binding residues include Glu-729, Phe-771, Lys-795, Arg-838, Thr-918, Gly-919, and Asp-920. A disordered region spans residues 971 to 990 (PELASSRKNFPQPSDAQGQG). Positions 976-987 (SRKNFPQPSDAQ) are enriched in polar residues. Residues 993-1000 (GLVITGKT), Arg-1027, and Lys-1033 each bind ATP. Position 1053 (Asp-1053) interacts with Mg(2+). ATP-binding residues include Asn-1056 and Asp-1057. Asp-1057 serves as a coordination point for Mg(2+). The helical transmembrane segment at 1111 to 1131 (ILYFFYKNVAYVNLLFWYQFF) threads the bilayer. At 1132–1142 (CGFSGTSMTDY) the chain is on the exoplasmic loop side. A helical membrane pass occupies residues 1143-1163 (WVLIFFNLLFTSVPPIIYGVL). The Cytoplasmic segment spans residues 1164 to 1192 (EKDVSAETLLQLPELYRSGQRSEEYLPLT). Residues 1193–1213 (FWITLLDAFYQSLVCFFVPYF) traverse the membrane as a helical segment. At 1214–1221 (TYQGSDID) the chain is on the exoplasmic loop side. The helical transmembrane segment at 1222 to 1242 (IFTFGNPLNTAALFIILLHLV) threads the bilayer. Topologically, residues 1243–1252 (IESKSLTWIH) are cytoplasmic. Residues 1253–1273 (MLVTVGSILSYFFFALAFGAL) traverse the membrane as a helical segment. The Exoplasmic loop segment spans residues 1274-1289 (CVTCNPPSNPYGIMRK). A helical transmembrane segment spans residues 1290–1310 (HMLDPVFYLVCVLTTFVALLP). Over 1311-1416 (RFLYRVLQGS…ASKMTGSSAS (106 aa)) the chain is Cytoplasmic. The tract at residues 1358–1416 (SKHASQSAAMSGRPTPGSSAVLAMKSATVSTVEQSTRETALDRGCSEPGASKMTGSSAS) is disordered. 1361–1368 (ASQSAAMS) is an ATP binding site. Positions 1392-1402 (STRETALDRGC) are enriched in basic and acidic residues.

Belongs to the cation transport ATPase (P-type) (TC 3.A.3) family. Type IV subfamily. As to quaternary structure, component of a P4-ATPase flippase complex which consists of a catalytic alpha subunit ATP10A and an accessory beta subunit TMEM30A. Mg(2+) serves as cofactor. Post-translationally, autophosphorylated at the conserved aspartate of the P-type ATPase signature sequence. In terms of tissue distribution, expressed at low amounts in liver, brain, testes, and kidney (at protein level). Expressed in placenta.

The protein resides in the cell membrane. Its subcellular location is the endoplasmic reticulum membrane. The enzyme catalyses ATP + H2O + phospholipidSide 1 = ADP + phosphate + phospholipidSide 2.. The catalysed reaction is a beta-D-glucosyl-(1&lt;-&gt;1')-N-acylsphing-4-enine(out) + ATP + H2O = a beta-D-glucosyl-(1&lt;-&gt;1')-N-acylsphing-4-enine(in) + ADP + phosphate + H(+). Catalytic component of a P4-ATPase flippase complex, which catalyzes the hydrolysis of ATP coupled to the transport of glucosylceramide (GlcCer) from the outer to the inner leaflet of the plasma membrane. The sequence is that of Phospholipid-transporting ATPase VD (Atp10d) from Mus musculus (Mouse).